Reading from the N-terminus, the 381-residue chain is Sulfate/thiosulfate import ATP-binding protein CysA (381 aa).

The ABC transporter domain maps to 3–233; it reads ILVYEVSKSL…PIDYFVGIFS (231 aa). Residue 35–42 participates in ATP binding; that stretch reads GPSGSGKS.

This sequence belongs to the ABC transporter superfamily. Sulfate/tungstate importer (TC 3.A.1.6) family.

The protein resides in the plastid. It localises to the chloroplast. It carries out the reaction sulfate(out) + ATP + H2O = sulfate(in) + ADP + phosphate + H(+). The enzyme catalyses thiosulfate(out) + ATP + H2O = thiosulfate(in) + ADP + phosphate + H(+). Functionally, part of the ABC transporter complex involved in sulfate/thiosulfate import. Responsible for energy coupling to the transport system. This is Sulfate/thiosulfate import ATP-binding protein CysA from Anthoceros angustus (Hornwort).